The sequence spans 77 residues: UPF0349 protein lin2491 (77 aa).

It belongs to the UPF0349 family.

This chain is UPF0349 protein lin2491, found in Listeria innocua serovar 6a (strain ATCC BAA-680 / CLIP 11262).